The chain runs to 122 residues: Autophagy-related protein 8e (122 aa).

Gly118 carries Phosphatidylethanolamine amidated glycine lipidation. Residues 119-122 (ASSI) constitute a propeptide, removed in mature form.

The protein belongs to the ATG8 family. Interacts with ATG4. Interacts with SH3P2. Interacts with ATG1A and ATG11. Binds to ATG1A and ATG11 on autophagic vesicles. Post-translationally, the C-terminal 4 residues are removed by ATG4 to expose Gly-118 at the C-terminus. This Gly-118 forms then a thioester bond with the 'Cys-558' of ATG7 (E1-like activating enzyme) before being transferred to the 'Cys-258' of ATG3 (the specific E2 conjugating enzyme), in order to be finally amidated with phosphatidylethanolamine. This lipid modification anchors ATG8 to autophagosomes. As to expression, constitutively expressed.

The protein localises to the cytoplasmic vesicle. It is found in the autophagosome membrane. Its subcellular location is the vacuole membrane. The protein resides in the cytoplasm. It localises to the cytoskeleton. In terms of biological role, ubiquitin-like modifier involved in autophagosomes formation. May mediate the delivery of the autophagosomes to the vacuole via the microtubule cytoskeleton. This Arabidopsis thaliana (Mouse-ear cress) protein is Autophagy-related protein 8e (ATG8E).